Consider the following 72-residue polypeptide: Translation initiation factor IF-1 (72 aa).

The region spanning 1–72 (MSKEEVLEFS…TKGRIIYRYK (72 aa)) is the S1-like domain.

Belongs to the IF-1 family. In terms of assembly, component of the 30S ribosomal translation pre-initiation complex which assembles on the 30S ribosome in the order IF-2 and IF-3, IF-1 and N-formylmethionyl-tRNA(fMet); mRNA recruitment can occur at any time during PIC assembly.

The protein resides in the cytoplasm. One of the essential components for the initiation of protein synthesis. Stabilizes the binding of IF-2 and IF-3 on the 30S subunit to which N-formylmethionyl-tRNA(fMet) subsequently binds. Helps modulate mRNA selection, yielding the 30S pre-initiation complex (PIC). Upon addition of the 50S ribosomal subunit IF-1, IF-2 and IF-3 are released leaving the mature 70S translation initiation complex. The protein is Translation initiation factor IF-1 of Bartonella henselae (strain ATCC 49882 / DSM 28221 / CCUG 30454 / Houston 1) (Rochalimaea henselae).